Here is a 295-residue protein sequence, read N- to C-terminus: Glycine N-acyltransferase-like protein Keg1 (295 aa).

The residue at position 41 (K41) is an N6-acetyllysine; alternate. The residue at position 41 (K41) is an N6-succinyllysine; alternate. K43 is modified (N6-acetyllysine). K48 is subject to N6-acetyllysine; alternate. An N6-succinyllysine; alternate modification is found at K48. N6-acetyllysine occurs at positions 80 and 83. Residues K124, K128, and K140 each carry the N6-acetyllysine; alternate modification. An N6-succinyllysine; alternate mark is found at K124, K128, and K140. K150 bears the N6-acetyllysine mark. K255 carries the N6-acetyllysine; alternate modification. K255 is modified (N6-succinyllysine; alternate).

This sequence belongs to the glycine N-acyltransferase family. In terms of assembly, binds to microtubules.

It localises to the cytoplasm. Its subcellular location is the cytoskeleton. The protein resides in the microtubule organizing center. The protein localises to the centrosome. It catalyses the reaction an acyl-CoA + glycine = an N-acylglycine + CoA + H(+). Functionally, acyltransferase which transfers the acyl group to the N-terminus of glycine. Can conjugate a multitude of substrates to form a variety of N-acylglycines. The chain is Glycine N-acyltransferase-like protein Keg1 (Keg1) from Mus musculus (Mouse).